A 140-amino-acid chain; its full sequence is Aspartate 1-decarboxylase (140 aa).

The active-site Schiff-base intermediate with substrate; via pyruvic acid is S25. S25 bears the Pyruvic acid (Ser) mark. T57 contacts substrate. Y58 functions as the Proton donor in the catalytic mechanism. Substrate is bound at residue 73–75; that stretch reads GAA.

Belongs to the PanD family. As to quaternary structure, heterooctamer of four alpha and four beta subunits. The cofactor is pyruvate. Is synthesized initially as an inactive proenzyme, which is activated by self-cleavage at a specific serine bond to produce a beta-subunit with a hydroxyl group at its C-terminus and an alpha-subunit with a pyruvoyl group at its N-terminus.

Its subcellular location is the cytoplasm. The enzyme catalyses L-aspartate + H(+) = beta-alanine + CO2. Its pathway is cofactor biosynthesis; (R)-pantothenate biosynthesis; beta-alanine from L-aspartate: step 1/1. Catalyzes the pyruvoyl-dependent decarboxylation of aspartate to produce beta-alanine. The polypeptide is Aspartate 1-decarboxylase (Persephonella marina (strain DSM 14350 / EX-H1)).